The chain runs to 1292 residues: Putative late blight resistance protein homolog R1C-3 (1292 aa).

2 coiled-coil regions span residues 394-414 (DSLAFLKNQLQVIQTKFESMQ) and 505-526 (RMNEEIVGFEDVIETLRKKLLN). The region spanning 505–792 (RMNEEIVGFE…SESFVKSCEG (288 aa)) is the NB-ARC domain. Residue 538 to 545 (GMPGLGKT) participates in ATP binding. LRR repeat units lie at residues 842–865 (AEENFLLWINRDQITKPSSCVYSH), 920–944 (FKFLKVLDLEHQVVIDSIPTELFYL), 963–991 (LWNLETLILNRTSAATGKTLLLPSTVWDM), 1066–1089 (PIRLEMLKLHQSNIFNPISFCISA), 1094–1113 (YLELSGFYLDSQYLSETADH), 1114–1142 (LKHLEVLKLYYVEFGDHREWKVSNGMFPQ), and 1163–1187 (FPNLEQLVLRGCRHLMEIPSCFMDI). The 68-residue stretch at 1211-1278 (ETQVEDNQNT…KLRNVAYADE (68 aa)) folds into the HMA domain.

This sequence belongs to the disease resistance NB-LRR family.

It is found in the cytoplasm. The protein resides in the membrane. Functionally, confers resistance to late blight (Phytophthora infestans) races carrying the avirulence gene Avr1. Resistance proteins guard the plant against pathogens that contain an appropriate avirulence protein via an indirect interaction with this avirulence protein. That triggers a defense system including the hypersensitive response, which restricts the pathogen growth. The polypeptide is Putative late blight resistance protein homolog R1C-3 (R1C-3) (Solanum demissum (Wild potato)).